The primary structure comprises 1272 residues: MPEPAKKAVSAFTKKPKTTEVAAGSTAVFEAETEKTGIKVKWQRAGTEITDSEKYAIKAEGNKHSLTISNVGKDDEVTYAVIAGTSKVKFELKVKEPEKSEPVAPAEASPAPAASELPAPPVESNQNPEVPPAETQPEEPVDPIGLFVTRPQDGEVTVGGNITFTAKVAGESLLKKPSVKWFKGKWMDLASKVGKHLQLHDNYDRNNKVYTFEMEIIEANMTFAGGYRCEVSTKDKFDSSNFNLIVNEAPVSGEMDIRAAFRRTSLAGGGRRMTSAFLSTEGLEESGELNFSALLKKRDSFLRTANRGDGKSDSQPDVDVWEILRKAPPSEYEKIAFQYGITDLRGMLKRLKRIKKEEKKSTAFLKKLDPAYQVDKGQKIKLMVEVANPDADVKWLKNGQEIQVSGSKYIFEAIGNKRILTINHCSLADDAAYECVVAEEKSFTELFVKEPPILITHPLEDQMVMVGERVEFECEVSEEGATVKWEKDGVELTREETFKYRFKKDGKKQYLIINESTKEDSGHYTVKTNGGVSVAELIVQEKKLEVYQSIADLTVKARDQAVFKCEVSDENVKGIWLKNGKEVVPDERIKISHIGRIHKLTIEDVTPGDEADYSFIPQGFAYNLSAKLQFLEVKIDFVPREEPPKIHLDCLGQSPDTIVVVAGNKLRLDVPISGDPTPTVIWQKVNKKGELVHQSNEDSLTPSENSSDLSTDSKLLFESEGRVRVEKHEDHCVFIIEGAEKEDEGVYRVIVKNPVGEDKADITVKVIDVPDPPEAPKISNIGEDYCTVQWQPPTYDGGQPVLGYILERKKKKSYRWMRLNFDLLKELTYEAKRMIEGVVYEMRIYAVNSIGMSRPSPASQPFMPIAPPSEPTHFTVEDVSDTTVALKWRPPERIGAGGLDGYIVEYCKDGSAEWTPALPGLTERTSALIKDLVTGDKLYFRVKAINLAGESGAAIIKEPVTVQEIMQRPKICVPRHLRQTLVKKVGETINIMIPFQGKPRPKISWMKDGQTLDSKDVGIRNSSTDTILFIRKAELHHSGAYEVTLQIENMTDTVAITIQIIDKPGPPQNIKLADVWGFNVALEWTPPQDDGNAQILGYTVQKADKKTMEWYTVYDHYRRTNCVVSDLIMGNEYFFRVFSENLCGLSETAATTKNPAYIQKTGTTYKPPSYKEHDFSEPPKFTHPLVNRSVIAGYNTTLSCAVRGIPKPKIFWYKNKVDLSGDAKYRMFSKQGVLTLEIRKPTPLDGGFYTCKAVNERGEAEIECRLDVRVPQ.

Residues 95-147 form a disordered region; that stretch reads KEPEKSEPVAPAEASPAPAASELPAPPVESNQNPEVPPAETQPEEPVDPIGLF. The segment covering 102-117 has biased composition (low complexity); the sequence is PVAPAEASPAPAASEL. Positions 137 to 252 constitute an Ig-like C2-type 1 domain; sequence PEEPVDPIGL…NLIVNEAPVS (116 aa). The residue at position 265 (Ser265) is a Phosphoserine; by PKA and PKC. Thr274 bears the Phosphothreonine; by PKA and PKC mark. Position 300 is a phosphoserine; by PKA (Ser300). 4 consecutive Ig-like C2-type domains span residues 359–451, 452–542, 543–640, and 644–763; these read KKST…VKEP, PILI…VQEK, KLEV…FVPR, and PKIH…ADIT. 2 consecutive Fibronectin type-III domains span residues 772–868 and 870–965; these read PPEA…IAPP and EPTH…VQEI. The Ig-like C2-type 6 domain occupies 969–1057; it reads PKICVPRHLR…ENMTDTVAIT (89 aa). The 96-residue stretch at 1066–1161 folds into the Fibronectin type-III 3 domain; that stretch reads PPQNIKLADV…TKNPAYIQKT (96 aa). Ser1169 is subject to Phosphoserine; by PKC. The Ig-like C2-type 7 domain maps to 1179-1263; the sequence is PKFTHPLVNR…VNERGEAEIE (85 aa).

The protein belongs to the immunoglobulin superfamily. MyBP family. Post-translationally, substrate for phosphorylation by PKA and PKC. Reversible phosphorylation appears to modulate contraction. Expressed specifically in cardiac muscle among adult tissues, but is also expressed transiently in the skeletal muscle at early developmental stages. Isoform Type I is found in embryonic skeletal muscle and isoform Type II is found in both embryonic skeletal and cardiac muscle.

Its function is as follows. Thick filament-associated protein located in the crossbridge region of vertebrate striated muscle A bands. In vitro it binds MHC, F-actin and native thin filaments, and modifies the activity of actin-activated myosin ATPase. It may modulate muscle contraction or may play a more structural role. May be involved in the early phase of myofibrillogenesis. The sequence is that of Myosin-binding protein C, cardiac-type (MYBPC3) from Gallus gallus (Chicken).